A 141-amino-acid chain; its full sequence is Hemoglobin subunit alpha (141 aa).

The region spanning 1-141 (VLSAADKTAI…VATALGSHYR (141 aa)) is the Globin domain. His59 provides a ligand contact to O2. His88 serves as a coordination point for heme b.

This sequence belongs to the globin family. As to quaternary structure, heterotetramer of two alpha chains and two beta chains. In terms of tissue distribution, red blood cells.

In terms of biological role, involved in oxygen transport from the lung to the various peripheral tissues. The protein is Hemoglobin subunit alpha (HBA) of Squalus acanthias (Spiny dogfish).